Reading from the N-terminus, the 89-residue chain is Small ribosomal subunit protein bS20 (89 aa).

The protein belongs to the bacterial ribosomal protein bS20 family.

Binds directly to 16S ribosomal RNA. This Helicobacter pylori (strain ATCC 700392 / 26695) (Campylobacter pylori) protein is Small ribosomal subunit protein bS20.